The chain runs to 129 residues: Antimicrobial peptide NK-lysin (129 aa).

The first 6 residues, 1–6 (PGLAFS), serve as a signal peptide directing secretion. Positions 7 to 46 (GLTPEHSALARAHPCDGEQFCQNLAPEDPQGDQLLQREEL) are excised as a propeptide. A Saposin B-type domain is found at 46-126 (LGLICESCRK…VDIKICKEKT (81 aa)). Cystine bridges form between Cys50–Cys122, Cys53–Cys116, and Cys81–Cys91. Residues 125–129 (KTGLI) constitute a propeptide that is removed on maturation.

In terms of tissue distribution, cytotoxic T and NK cells.

It localises to the secreted. Its function is as follows. May be an effector molecule of cytotoxic activity. High activity against E.coli and B.megaterium, moderate against A.calcoaceticus and S.pyogenes. No activity against P.aeruginosa, S.aureus and Salmonella. Has some antifungal activity against C.albicans. In Sus scrofa (Pig), this protein is Antimicrobial peptide NK-lysin (NKL).